The chain runs to 202 residues: Peptidyl-tRNA hydrolase (202 aa).

TRNA is bound at residue Y14. The Proton acceptor role is filled by H19. The tRNA site is built by Y64, N66, and N112.

The protein belongs to the PTH family. As to quaternary structure, monomer.

Its subcellular location is the cytoplasm. The enzyme catalyses an N-acyl-L-alpha-aminoacyl-tRNA + H2O = an N-acyl-L-amino acid + a tRNA + H(+). Functionally, hydrolyzes ribosome-free peptidyl-tRNAs (with 1 or more amino acids incorporated), which drop off the ribosome during protein synthesis, or as a result of ribosome stalling. In terms of biological role, catalyzes the release of premature peptidyl moieties from peptidyl-tRNA molecules trapped in stalled 50S ribosomal subunits, and thus maintains levels of free tRNAs and 50S ribosomes. This chain is Peptidyl-tRNA hydrolase, found in Nitrobacter winogradskyi (strain ATCC 25391 / DSM 10237 / CIP 104748 / NCIMB 11846 / Nb-255).